Here is a 301-residue protein sequence, read N- to C-terminus: Protoheme IX farnesyltransferase (301 aa).

The next 8 membrane-spanning stretches (helical) occupy residues 25–45 (VTQL…PGMV), 47–67 (WTPL…AFAI), 97–117 (ILLF…TFAN), 119–139 (LTMW…TLLL), 147–167 (IVIG…AVTG), 173–193 (AWIL…ALAL), 235–255 (FISG…GALF), and 279–299 (IVYL…RVLI).

The protein belongs to the UbiA prenyltransferase family. Protoheme IX farnesyltransferase subfamily.

It is found in the cell inner membrane. It catalyses the reaction heme b + (2E,6E)-farnesyl diphosphate + H2O = Fe(II)-heme o + diphosphate. The protein operates within porphyrin-containing compound metabolism; heme O biosynthesis; heme O from protoheme: step 1/1. Converts heme B (protoheme IX) to heme O by substitution of the vinyl group on carbon 2 of heme B porphyrin ring with a hydroxyethyl farnesyl side group. This is Protoheme IX farnesyltransferase from Paraburkholderia xenovorans (strain LB400).